The chain runs to 311 residues: Lipid A biosynthesis acyltransferase (311 aa).

The helical transmembrane segment at 19-39 (WLFWLGVAIWRSILCLPYPIL) threads the bilayer. The short motif at 134-139 (HFLTLE) is the HXXXXD motif element.

This sequence belongs to the LpxL/LpxM/LpxP family.

The protein localises to the cell inner membrane. The catalysed reaction is an alpha-Kdo-(2-&gt;4)-alpha-Kdo-(2-&gt;6)-lipid IVA + a fatty acyl-[ACP] = an alpha-Kdo-(2-&gt;4)-alpha-Kdo-(2-&gt;6)-(acyl)-lipid IVA + holo-[ACP]. It functions in the pathway glycolipid biosynthesis; KDO(2)-lipid A biosynthesis; KDO(2)-lipid A from CMP-3-deoxy-D-manno-octulosonate and lipid IV(A): step 3/4. It participates in bacterial outer membrane biogenesis; lipopolysaccharide biosynthesis. Its function is as follows. Catalyzes the transfer of an acyl chain from an acyl-[acyl-carrier-protein] (ACP) to a Kdo(2)-lipid IV(A) to form a Kdo(2)-(acyl)-lipid IV(A). This is Lipid A biosynthesis acyltransferase from Haemophilus influenzae (strain ATCC 51907 / DSM 11121 / KW20 / Rd).